A 138-amino-acid chain; its full sequence is uncharacterized protein (138 aa).

The disordered stretch occupies residues 84–104 (PPKKTSPATSSSLKPRPGPRG). A compositionally biased stretch (low complexity) spans 85 to 98 (PKKTSPATSSSLKP).

The protein to M.pneumoniae MPN_413 and MPN_463.

This is an uncharacterized protein from Mycoplasma pneumoniae (strain ATCC 29342 / M129 / Subtype 1) (Mycoplasmoides pneumoniae).